The chain runs to 250 residues: PF03932 family protein CutC (250 aa).

This sequence belongs to the CutC family.

It localises to the cytoplasm. The chain is PF03932 family protein CutC from Proteus mirabilis (strain HI4320).